A 409-amino-acid chain; its full sequence is Phosphoglycerate kinase (409 aa).

Substrate-binding positions include 22 to 24 (DLN), arginine 37, 60 to 63 (HLSR), arginine 122, and arginine 164. Residues lysine 215, glutamate 338, and 365–368 (GGDS) each bind ATP.

Belongs to the phosphoglycerate kinase family. As to quaternary structure, monomer.

The protein resides in the cytoplasm. It catalyses the reaction (2R)-3-phosphoglycerate + ATP = (2R)-3-phospho-glyceroyl phosphate + ADP. It functions in the pathway carbohydrate degradation; glycolysis; pyruvate from D-glyceraldehyde 3-phosphate: step 2/5. This chain is Phosphoglycerate kinase (pgk), found in Mycoplasma pneumoniae (strain ATCC 29342 / M129 / Subtype 1) (Mycoplasmoides pneumoniae).